Consider the following 908-residue polypeptide: SKI/DACH domain-containing protein 1 (908 aa).

Over residues 337 to 353 the composition is skewed to basic residues; sequence HHHHHHHHHHHHHHHRA. The segment at 337 to 461 is disordered; that stretch reads HHHHHHHHHH…SSSGSSQVSV (125 aa). 2 stretches are compositionally biased toward low complexity: residues 370–389 and 396–410; these read PHLG…SSYS and SDFG…NSVS. Residues 411-429 are compositionally biased toward acidic residues; the sequence is SEEEEEEGEEEEEEEEEEG. Positions 449-461 are enriched in low complexity; it reads ESDSSSGSSQVSV. Lys-688 participates in a covalent cross-link: Glycyl lysine isopeptide (Lys-Gly) (interchain with G-Cter in SUMO2). Disordered regions lie at residues 744-763 and 792-818; these read ETPS…TLGS and LQTP…TNEG. The span at 746–761 shows a compositional bias: polar residues; that stretch reads PSLNPLAQSQGLSCTL.

It belongs to the DACH/dachshund family.

In Homo sapiens (Human), this protein is SKI/DACH domain-containing protein 1 (SKIDA1).